We begin with the raw amino-acid sequence, 37 residues long: Large ribosomal subunit protein bL36c (37 aa).

This sequence belongs to the bacterial ribosomal protein bL36 family.

Its subcellular location is the plastid. The protein resides in the chloroplast. This Stigeoclonium helveticum (Green alga) protein is Large ribosomal subunit protein bL36c.